A 339-amino-acid chain; its full sequence is RNA 3'-terminal phosphate cyclase (339 aa).

ATP-binding positions include aspartate 109 and 286-290 (HLADQ). Histidine 310 serves as the catalytic Tele-AMP-histidine intermediate.

It belongs to the RNA 3'-terminal cyclase family. Type 1 subfamily.

It localises to the cytoplasm. It carries out the reaction a 3'-end 3'-phospho-ribonucleotide-RNA + ATP = a 3'-end 2',3'-cyclophospho-ribonucleotide-RNA + AMP + diphosphate. In terms of biological role, catalyzes the conversion of 3'-phosphate to a 2',3'-cyclic phosphodiester at the end of RNA. The mechanism of action of the enzyme occurs in 3 steps: (A) adenylation of the enzyme by ATP; (B) transfer of adenylate to an RNA-N3'P to produce RNA-N3'PP5'A; (C) and attack of the adjacent 2'-hydroxyl on the 3'-phosphorus in the diester linkage to produce the cyclic end product. The biological role of this enzyme is unknown but it is likely to function in some aspects of cellular RNA processing. The protein is RNA 3'-terminal phosphate cyclase of Halobacterium salinarum (strain ATCC 29341 / DSM 671 / R1).